The primary structure comprises 83 residues: Alpha-neurotoxin NTX-4 (83 aa).

Positions 1 to 21 (MKTLLLTLLVVTIVCLDLGYT) are cleaved as a signal peptide. Disulfide bonds link Cys24/Cys45, Cys38/Cys62, Cys64/Cys75, and Cys76/Cys81.

Belongs to the three-finger toxin family. Short-chain subfamily. Type I alpha-neurotoxin sub-subfamily. Expressed by the venom gland.

The protein localises to the secreted. Its function is as follows. Binds to muscle nicotinic acetylcholine receptor (nAChR) and inhibit acetylcholine from binding to the receptor, thereby impairing neuromuscular transmission. The sequence is that of Alpha-neurotoxin NTX-4 from Naja sputatrix (Malayan spitting cobra).